The primary structure comprises 65 residues: Putative beta-neurotoxin RjAa8 (65 aa).

An LCN-type CS-alpha/beta domain is found at 1–64; the sequence is KEGYPMGRDG…VWDSSTNKCG (64 aa). Intrachain disulfides connect cysteine 11/cysteine 63, cysteine 15/cysteine 37, cysteine 22/cysteine 44, and cysteine 26/cysteine 46.

The protein belongs to the long (4 C-C) scorpion toxin superfamily. Sodium channel inhibitor family. Beta subfamily. In terms of tissue distribution, expressed by the venom gland.

It is found in the secreted. In terms of biological role, beta toxins bind voltage-independently at site-4 of sodium channels (Nav) and shift the voltage of activation toward more negative potentials thereby affecting sodium channel activation and promoting spontaneous and repetitive firing. The polypeptide is Putative beta-neurotoxin RjAa8 (Rhopalurus junceus (Caribbean blue scorpion)).